We begin with the raw amino-acid sequence, 95 residues long: Aspartyl/glutamyl-tRNA(Asn/Gln) amidotransferase subunit C (95 aa).

The protein belongs to the GatC family. As to quaternary structure, heterotrimer of A, B and C subunits.

It catalyses the reaction L-glutamyl-tRNA(Gln) + L-glutamine + ATP + H2O = L-glutaminyl-tRNA(Gln) + L-glutamate + ADP + phosphate + H(+). The catalysed reaction is L-aspartyl-tRNA(Asn) + L-glutamine + ATP + H2O = L-asparaginyl-tRNA(Asn) + L-glutamate + ADP + phosphate + 2 H(+). In terms of biological role, allows the formation of correctly charged Asn-tRNA(Asn) or Gln-tRNA(Gln) through the transamidation of misacylated Asp-tRNA(Asn) or Glu-tRNA(Gln) in organisms which lack either or both of asparaginyl-tRNA or glutaminyl-tRNA synthetases. The reaction takes place in the presence of glutamine and ATP through an activated phospho-Asp-tRNA(Asn) or phospho-Glu-tRNA(Gln). The chain is Aspartyl/glutamyl-tRNA(Asn/Gln) amidotransferase subunit C from Alkalilimnicola ehrlichii (strain ATCC BAA-1101 / DSM 17681 / MLHE-1).